Consider the following 140-residue polypeptide: Cysteine desulfuration protein SufE (140 aa).

The active-site Cysteine persulfide intermediate is C51.

Belongs to the SufE family. Homodimer. Interacts with SufS.

It localises to the cytoplasm. It functions in the pathway cofactor biosynthesis; iron-sulfur cluster biosynthesis. Participates in cysteine desulfuration mediated by SufS. Cysteine desulfuration mobilizes sulfur from L-cysteine to yield L-alanine and constitutes an essential step in sulfur metabolism for biosynthesis of a variety of sulfur-containing biomolecules. Functions as a sulfur acceptor for SufS, by mediating the direct transfer of the sulfur atom from the S-sulfanylcysteine of SufS, an intermediate product of cysteine desulfuration process. The polypeptide is Cysteine desulfuration protein SufE (Yersinia pseudotuberculosis serotype O:1b (strain IP 31758)).